A 293-amino-acid polypeptide reads, in one-letter code: 4-diphosphocytidyl-2-C-methyl-D-erythritol kinase (293 aa).

Lys-16 is a catalytic residue. An ATP-binding site is contributed by 99 to 109 (PMGAGLGGGSS). Asp-141 is an active-site residue.

It belongs to the GHMP kinase family. IspE subfamily.

The catalysed reaction is 4-CDP-2-C-methyl-D-erythritol + ATP = 4-CDP-2-C-methyl-D-erythritol 2-phosphate + ADP + H(+). It participates in isoprenoid biosynthesis; isopentenyl diphosphate biosynthesis via DXP pathway; isopentenyl diphosphate from 1-deoxy-D-xylulose 5-phosphate: step 3/6. Its function is as follows. Catalyzes the phosphorylation of the position 2 hydroxy group of 4-diphosphocytidyl-2C-methyl-D-erythritol. The sequence is that of 4-diphosphocytidyl-2-C-methyl-D-erythritol kinase from Burkholderia cenocepacia (strain HI2424).